A 141-amino-acid chain; its full sequence is MATLHVDVVSAEEAIFSGEAKFVVLPGESGELGILPGHTPLISRIRPGTVKIVRADEGEENIFVAGGILEVQPGSVTVLSDTAIRAADLDEARALAAREKAEEALRNAKDREDIAAVEAELAMLAAQALAARRLRPGRGSH.

It belongs to the ATPase epsilon chain family. In terms of assembly, F-type ATPases have 2 components, CF(1) - the catalytic core - and CF(0) - the membrane proton channel. CF(1) has five subunits: alpha(3), beta(3), gamma(1), delta(1), epsilon(1). CF(0) has three main subunits: a, b and c.

It is found in the cell inner membrane. In terms of biological role, produces ATP from ADP in the presence of a proton gradient across the membrane. The polypeptide is ATP synthase epsilon chain (Bordetella avium (strain 197N)).